We begin with the raw amino-acid sequence, 209 residues long: Tumor suppressor candidate gene 1 protein (209 aa).

3 disordered regions span residues 1-55, 111-157, and 172-209; these read MWRM…DGAR, ALRL…LRAR, and LHLE…GPWL. Gly residues predominate over residues 14-47; it reads CCGGDGAADGRGPGRSGRARGGGSPSGGGGGVGW. Positions 70–114 form a coiled coil; the sequence is LEAIRARDEWDRQNARLRQENARLRLENRRLKRENRSLFRQALRL. Residues 125–149 show a composition bias toward basic and acidic residues; sequence EARRVPEEASTNRRARDSGREDEPG. Ser-150 carries the post-translational modification Phosphoserine. Positions 152-177 form a coiled coil; it reads RALRARLEKLEAMYRRALLQLHLEQR. Residues 174-188 show a composition bias toward basic and acidic residues; the sequence is LEQRGPRPSGDKEEQ.

In terms of tissue distribution, widely expressed at low level. Expressed at higher level in testis, weakly expressed in muscle, colon, lung and spleen. Not detected in 3 non small cell lung carcinoma (NSCLC) cell lines with homozygous deletion of the 9p region, while it is down-regulated in 3 other tumor cell lines.

This Homo sapiens (Human) protein is Tumor suppressor candidate gene 1 protein (TUSC1).